Consider the following 497-residue polypeptide: Probable cytosol aminopeptidase (497 aa).

2 residues coordinate Mn(2+): Lys267 and Asp272. Residue Lys279 is part of the active site. Residues Asp290, Asp349, and Glu351 each coordinate Mn(2+). The active site involves Arg353.

This sequence belongs to the peptidase M17 family. Mn(2+) serves as cofactor.

The protein resides in the cytoplasm. The enzyme catalyses Release of an N-terminal amino acid, Xaa-|-Yaa-, in which Xaa is preferably Leu, but may be other amino acids including Pro although not Arg or Lys, and Yaa may be Pro. Amino acid amides and methyl esters are also readily hydrolyzed, but rates on arylamides are exceedingly low.. It carries out the reaction Release of an N-terminal amino acid, preferentially leucine, but not glutamic or aspartic acids.. Its function is as follows. Presumably involved in the processing and regular turnover of intracellular proteins. Catalyzes the removal of unsubstituted N-terminal amino acids from various peptides. The sequence is that of Probable cytosol aminopeptidase from Pseudomonas putida (strain ATCC 47054 / DSM 6125 / CFBP 8728 / NCIMB 11950 / KT2440).